Here is a 137-residue protein sequence, read N- to C-terminus: MLQPKRRKYRKEQKGRNTGVATRGSSVAFGDFGLKAVGRGRLTARQIESARRAMTRHIKRGGRIWIRIFPDKPISQKPAEVRMGNGKGNPEYYVAEIQPGKVLYEMDGVDEQLAREAFKLAAAKLPLQTTFVIRHLG.

Positions 1–13 (MLQPKRRKYRKEQ) are enriched in basic residues. A disordered region spans residues 1–22 (MLQPKRRKYRKEQKGRNTGVAT).

This sequence belongs to the universal ribosomal protein uL16 family. In terms of assembly, part of the 50S ribosomal subunit.

Functionally, binds 23S rRNA and is also seen to make contacts with the A and possibly P site tRNAs. The polypeptide is Large ribosomal subunit protein uL16 (Polynucleobacter asymbioticus (strain DSM 18221 / CIP 109841 / QLW-P1DMWA-1) (Polynucleobacter necessarius subsp. asymbioticus)).